The chain runs to 487 residues: Uronate isomerase (487 aa).

This sequence belongs to the metallo-dependent hydrolases superfamily. Uronate isomerase family.

It carries out the reaction D-glucuronate = D-fructuronate. The enzyme catalyses aldehydo-D-galacturonate = keto-D-tagaturonate. The protein operates within carbohydrate metabolism; pentose and glucuronate interconversion. The chain is Uronate isomerase from Caulobacter vibrioides (strain ATCC 19089 / CIP 103742 / CB 15) (Caulobacter crescentus).